Consider the following 227-residue polypeptide: Cytochrome c oxidase subunit 2 (227 aa).

Over 1 to 14 (MAYPFQLGFQDATS) the chain is Mitochondrial intermembrane. The chain crosses the membrane as a helical span at residues 15–45 (PIMEELLHFHDHTLMIVFLISSLVLYIISLM). Residues 46–59 (LTTKLTHTSTMDAQ) are Mitochondrial matrix-facing. Residues 60 to 87 (EVETIWTILPAIILILIALPSLRILYMM) traverse the membrane as a helical segment. At 88–227 (DEINNPSLTV…HFEKWSASML (140 aa)) the chain is on the mitochondrial intermembrane side. Residues H161, C196, E198, C200, H204, and M207 each coordinate Cu cation. Mg(2+) is bound at residue E198.

The protein belongs to the cytochrome c oxidase subunit 2 family. As to quaternary structure, component of the cytochrome c oxidase (complex IV, CIV), a multisubunit enzyme composed of 14 subunits. The complex is composed of a catalytic core of 3 subunits MT-CO1, MT-CO2 and MT-CO3, encoded in the mitochondrial DNA, and 11 supernumerary subunits COX4I, COX5A, COX5B, COX6A, COX6B, COX6C, COX7A, COX7B, COX7C, COX8 and NDUFA4, which are encoded in the nuclear genome. The complex exists as a monomer or a dimer and forms supercomplexes (SCs) in the inner mitochondrial membrane with NADH-ubiquinone oxidoreductase (complex I, CI) and ubiquinol-cytochrome c oxidoreductase (cytochrome b-c1 complex, complex III, CIII), resulting in different assemblies (supercomplex SCI(1)III(2)IV(1) and megacomplex MCI(2)III(2)IV(2)). Found in a complex with TMEM177, COA6, COX18, COX20, SCO1 and SCO2. Interacts with TMEM177 in a COX20-dependent manner. Interacts with COX20. Interacts with COX16. Requires Cu cation as cofactor.

The protein localises to the mitochondrion inner membrane. The catalysed reaction is 4 Fe(II)-[cytochrome c] + O2 + 8 H(+)(in) = 4 Fe(III)-[cytochrome c] + 2 H2O + 4 H(+)(out). Its function is as follows. Component of the cytochrome c oxidase, the last enzyme in the mitochondrial electron transport chain which drives oxidative phosphorylation. The respiratory chain contains 3 multisubunit complexes succinate dehydrogenase (complex II, CII), ubiquinol-cytochrome c oxidoreductase (cytochrome b-c1 complex, complex III, CIII) and cytochrome c oxidase (complex IV, CIV), that cooperate to transfer electrons derived from NADH and succinate to molecular oxygen, creating an electrochemical gradient over the inner membrane that drives transmembrane transport and the ATP synthase. Cytochrome c oxidase is the component of the respiratory chain that catalyzes the reduction of oxygen to water. Electrons originating from reduced cytochrome c in the intermembrane space (IMS) are transferred via the dinuclear copper A center (CU(A)) of subunit 2 and heme A of subunit 1 to the active site in subunit 1, a binuclear center (BNC) formed by heme A3 and copper B (CU(B)). The BNC reduces molecular oxygen to 2 water molecules using 4 electrons from cytochrome c in the IMS and 4 protons from the mitochondrial matrix. The chain is Cytochrome c oxidase subunit 2 (MT-CO2) from Ceratotherium simum (White rhinoceros).